The following is an 896-amino-acid chain: DNA mismatch repair protein MutS (896 aa).

638–645 (GPNMSGKS) contributes to the ATP binding site.

Belongs to the DNA mismatch repair MutS family.

Functionally, this protein is involved in the repair of mismatches in DNA. It is possible that it carries out the mismatch recognition step. This protein has a weak ATPase activity. The chain is DNA mismatch repair protein MutS from Fusobacterium nucleatum subsp. nucleatum (strain ATCC 25586 / DSM 15643 / BCRC 10681 / CIP 101130 / JCM 8532 / KCTC 2640 / LMG 13131 / VPI 4355).